Here is a 343-residue protein sequence, read N- to C-terminus: Heat-inducible transcription repressor HrcA (343 aa).

This sequence belongs to the HrcA family.

In terms of biological role, negative regulator of class I heat shock genes (grpE-dnaK-dnaJ and groELS operons). Prevents heat-shock induction of these operons. The polypeptide is Heat-inducible transcription repressor HrcA (Mycobacterium avium (strain 104)).